We begin with the raw amino-acid sequence, 122 residues long: ATP synthase epsilon chain (122 aa).

Belongs to the ATPase epsilon chain family. In terms of assembly, F-type ATPases have 2 components, CF(1) - the catalytic core - and CF(0) - the membrane proton channel. CF(1) has five subunits: alpha(3), beta(3), gamma(1), delta(1), epsilon(1). CF(0) has three main subunits: a, b and c.

Its subcellular location is the cell membrane. Functionally, produces ATP from ADP in the presence of a proton gradient across the membrane. This Rhodococcus opacus (strain B4) protein is ATP synthase epsilon chain.